The chain runs to 592 residues: Membrane protein insertase YidC (592 aa).

The chain crosses the membrane as a helical span at residues 7 to 27; sequence NYFVAIALSVLILVAWQYFYV. The interval 38–74 is disordered; that stretch reads AEKAQQTQQVQPQQGGQQPAPGQALPGGAVPGESRDQ. Over residues 41-69 the composition is skewed to low complexity; it reads AQQTQQVQPQQGGQQPAPGQALPGGAVPG. 4 helical membrane-spanning segments follow: residues 367-387, 441-461, 486-506, and 530-550; these read LFGN…LIFF, WPIL…YITI, LFGL…WPII, and FTWM…GLVI.

It belongs to the OXA1/ALB3/YidC family. Type 1 subfamily. As to quaternary structure, interacts with the Sec translocase complex via SecD. Specifically interacts with transmembrane segments of nascent integral membrane proteins during membrane integration.

Its subcellular location is the cell inner membrane. Its function is as follows. Required for the insertion and/or proper folding and/or complex formation of integral membrane proteins into the membrane. Involved in integration of membrane proteins that insert both dependently and independently of the Sec translocase complex, as well as at least some lipoproteins. Aids folding of multispanning membrane proteins. This Sinorhizobium fredii (strain NBRC 101917 / NGR234) protein is Membrane protein insertase YidC.